The primary structure comprises 192 residues: dTTP/UTP pyrophosphatase (192 aa).

Asp-70 acts as the Proton acceptor in catalysis.

It belongs to the Maf family. YhdE subfamily. The cofactor is a divalent metal cation.

The protein localises to the cytoplasm. The catalysed reaction is dTTP + H2O = dTMP + diphosphate + H(+). The enzyme catalyses UTP + H2O = UMP + diphosphate + H(+). Its function is as follows. Nucleoside triphosphate pyrophosphatase that hydrolyzes dTTP and UTP. May have a dual role in cell division arrest and in preventing the incorporation of modified nucleotides into cellular nucleic acids. The sequence is that of dTTP/UTP pyrophosphatase from Clostridium perfringens (strain ATCC 13124 / DSM 756 / JCM 1290 / NCIMB 6125 / NCTC 8237 / Type A).